Consider the following 400-residue polypeptide: Casein kinase I homolog hhp2 (400 aa).

Residues 12 to 278 (YRIGRKIGSG…YLRKLFRDLL (267 aa)) enclose the Protein kinase domain. ATP contacts are provided by residues 18–26 (IGSGSFGQI) and Lys41. Asp131 serves as the catalytic Proton acceptor. A disordered region spans residues 330–352 (PNYSSIPLPAERNPKTPQSFSTN).

This sequence belongs to the protein kinase superfamily. CK1 Ser/Thr protein kinase family. Casein kinase I subfamily.

Its subcellular location is the nucleus. It catalyses the reaction L-seryl-[protein] + ATP = O-phospho-L-seryl-[protein] + ADP + H(+). The catalysed reaction is L-threonyl-[protein] + ATP = O-phospho-L-threonyl-[protein] + ADP + H(+). In terms of biological role, involved in DNA repair. May regulate the activity of protein(s) involved in double strand break repair caused by gamma rays. The chain is Casein kinase I homolog hhp2 (hhp2) from Schizosaccharomyces pombe (strain 972 / ATCC 24843) (Fission yeast).